A 574-amino-acid chain; its full sequence is Cholinesterase (574 aa).

An N-linked (GlcNAc...) asparagine glycan is attached at Asn-57. Cysteines 65 and 92 form a disulfide. Residue Asn-106 is glycosylated (N-linked (GlcNAc...) asparagine). Position 116 to 117 (116 to 117 (GG)) interacts with substrate. Ser-198 acts as the Acyl-ester intermediate in catalysis. Ser-198 is modified (phosphoserine). N-linked (GlcNAc...) asparagine glycans are attached at residues Asn-241 and Asn-256. A disulfide bond links Cys-252 and Cys-263. Residue Glu-325 is the Charge relay system of the active site. Asn-341 is a glycosylation site (N-linked (GlcNAc...) asparagine). A disulfide bond links Cys-400 and Cys-519. The active-site Charge relay system is His-438. Residues Asn-455, Asn-481, and Asn-486 are each glycosylated (N-linked (GlcNAc...) asparagine).

The protein belongs to the type-B carboxylesterase/lipase family. As to quaternary structure, homotetramer; disulfide-linked. Dimer of dimers. In terms of tissue distribution, detected in blood plasma (at protein level). Present in most cells except erythrocytes.

The protein localises to the secreted. It catalyses the reaction an acylcholine + H2O = a carboxylate + choline + H(+). In terms of biological role, esterase with broad substrate specificity. Contributes to the inactivation of the neurotransmitter acetylcholine. Can degrade neurotoxic organophosphate esters. In Equus caballus (Horse), this protein is Cholinesterase (BCHE).